The sequence spans 127 residues: Small ribosomal subunit protein uS13 (127 aa).

Residues 90–127 are disordered; it reads RRHRQGLPVRGQRTRTNARTRRGRRVTVAGKKKAPSKK. Residues 101 to 127 are compositionally biased toward basic residues; that stretch reads QRTRTNARTRRGRRVTVAGKKKAPSKK.

It belongs to the universal ribosomal protein uS13 family. As to quaternary structure, part of the 30S ribosomal subunit. Forms a loose heterodimer with protein S19. Forms two bridges to the 50S subunit in the 70S ribosome.

Its function is as follows. Located at the top of the head of the 30S subunit, it contacts several helices of the 16S rRNA. In the 70S ribosome it contacts the 23S rRNA (bridge B1a) and protein L5 of the 50S subunit (bridge B1b), connecting the 2 subunits; these bridges are implicated in subunit movement. Contacts the tRNAs in the A and P-sites. This chain is Small ribosomal subunit protein uS13, found in Rippkaea orientalis (strain PCC 8801 / RF-1) (Cyanothece sp. (strain PCC 8801)).